Consider the following 241-residue polypeptide: Homeobox protein TGIF2LX (241 aa).

Disordered regions lie at residues 1–56 (MEAA…PKGY) and 115–213 (RHGN…EYPD). Over residues 21–39 (AKTQSPAQDTSTVSRNSAD) the composition is skewed to polar residues. The homeobox; TALE-type DNA-binding region spans 48-111 (EHTKKPKGYL…INARRRILPD (64 aa)).

Belongs to the TALE/TGIF homeobox family.

Its subcellular location is the nucleus. May have a transcription role in testis. This chain is Homeobox protein TGIF2LX (TGIF2LX), found in Hylobates lar (Lar gibbon).